The sequence spans 67 residues: Large ribosomal subunit protein bL35 (67 aa).

The tract at residues 1–20 is disordered; the sequence is MPKLKTKSGAKKRFVPKKSG.

The protein belongs to the bacterial ribosomal protein bL35 family.

This Anaeromyxobacter dehalogenans (strain 2CP-C) protein is Large ribosomal subunit protein bL35.